Reading from the N-terminus, the 863-residue chain is Envelope glycoprotein gp160 (863 aa).

The N-terminal stretch at 1–32 (MIVTMKAMEKRNKKLWTLYLAMALITPCLSLR) is a signal peptide. Over 33–684 (QLYATVYAGV…ITKWLWYIKI (652 aa)) the chain is Extracellular. A disulfide bridge links C54 with C74. Residues N59 and N88 are each glycosylated (N-linked (GlcNAc...) asparagine; by host). Intrachain disulfides connect C119/C201, C126/C192, C131/C146, C214/C243, and C224/C235. Residues 131–145 (CTNIAGTTNENLMKK) form a V1 region. Residues 146–192 (CEFNVTTVIKDKKEKKQALFYVSDLMELNETSSTNKTNSKMYTLTNC) form a V2 region. N-linked (GlcNAc...) asparagine; by host glycosylation is found at N149, N174, N180, N193, N225, N230, N237, N258, N285, N289, N320, N330, N350, N356, and N360. The tract at residues 292-326 (CERPQIDIQEMRIGPMAWYSMGIGGTAGNSSRAAY) is V3. C292 and C327 are joined by a disulfide. Residues 362–372 (SSGGDLEVTHL) form a CD4-binding loop region. 2 cysteine pairs are disulfide-bonded: C376-C442 and C383-C415. Residues 383 to 415 (CNTAKMFNYTFSCNGTTCSVSNVSQGNNGTLPC) form a V4 region. 8 N-linked (GlcNAc...) asparagine; by host glycosylation sites follow: N390, N396, N404, N410, N439, N445, N458, and N463. 2 V5 regions span residues 458 to 469 (NSSNNNVTFRPI) and 460 to 469 (SNNNVTFRPI). The interval 514 to 534 (AVGLGMLFLGVLSAAGSTMGA) is fusion peptide. The segment at 576-594 (RQLRARLLALETLLQNQQL) is immunosuppression. A disulfide bridge connects residues C600 and C606. N613, N619, and N637 each carry an N-linked (GlcNAc...) asparagine; by host glycan. Residues 633 to 667 (RQISNISSTIYEEIQKAQVQQEQNEKKLLELDEWA) adopt a coiled-coil conformation. The interval 662–683 (ELDEWASIWNWLDITKWLWYIK) is MPER; binding to GalCer. A helical membrane pass occupies residues 685–705 (AIIIVGALVGVRVIMIVLNIV). The Cytoplasmic segment spans residues 706–863 (KNIRQGYQPL…IRQGLERSLL (158 aa)). Positions 712 to 715 (YQPL) match the YXXL motif; contains endocytosis signal motif. Positions 862-863 (LL) match the Di-leucine internalization motif motif.

This sequence belongs to the HIV-1 env protein family. In terms of assembly, the mature envelope protein (Env) consists of a homotrimer of non-covalently associated gp120-gp41 heterodimers. The resulting complex protrudes from the virus surface as a spike. There seems to be as few as 10 spikes on the average virion. Interacts with host CD4, CCR5 and CXCR4. Gp120 also interacts with the C-type lectins CD209/DC-SIGN and CLEC4M/DC-SIGNR (collectively referred to as DC-SIGN(R)). Gp120 and gp41 interact with GalCer. Gp120 interacts with host ITGA4/ITGB7 complex; on CD4+ T-cells, this interaction results in rapid activation of integrin ITGAL/LFA-1, which facilitates efficient cell-to-cell spreading of HIV-1. Gp120 interacts with cell-associated heparan sulfate; this interaction increases virus infectivity on permissive cells and may be involved in infection of CD4- cells. The mature envelope protein (Env) consists of a homotrimer of non-covalently associated gp120-gp41 heterodimers. The resulting complex protrudes from the virus surface as a spike. There seems to be as few as 10 spikes on the average virion. Post-translationally, highly glycosylated by host. The high number of glycan on the protein is reffered to as 'glycan shield' because it contributes to hide protein sequence from adaptive immune system. In terms of processing, palmitoylation of the transmembrane protein and of Env polyprotein (prior to its proteolytic cleavage) is essential for their association with host cell membrane lipid rafts. Palmitoylation is therefore required for envelope trafficking to classical lipid rafts, but not for viral replication. Specific enzymatic cleavages in vivo yield mature proteins. Envelope glycoproteins are synthesized as an inactive precursor that is heavily N-glycosylated and processed likely by host cell furin in the Golgi to yield the mature SU and TM proteins. The cleavage site between SU and TM requires the minimal sequence [KR]-X-[KR]-R. About 2 of the 9 disulfide bonds of gp41 are reduced by P4HB/PDI, following binding to CD4 receptor.

It is found in the virion membrane. The protein localises to the host cell membrane. Its subcellular location is the host endosome membrane. Functionally, oligomerizes in the host endoplasmic reticulum into predominantly trimers. In a second time, gp160 transits in the host Golgi, where glycosylation is completed. The precursor is then proteolytically cleaved in the trans-Golgi and thereby activated by cellular furin or furin-like proteases to produce gp120 and gp41. Its function is as follows. Attaches the virus to the host lymphoid cell by binding to the primary receptor CD4. This interaction induces a structural rearrangement creating a high affinity binding site for a chemokine coreceptor like CXCR4 and/or CCR5. Acts as a ligand for CD209/DC-SIGN and CLEC4M/DC-SIGNR, which are respectively found on dendritic cells (DCs), and on endothelial cells of liver sinusoids and lymph node sinuses. These interactions allow capture of viral particles at mucosal surfaces by these cells and subsequent transmission to permissive cells. HIV subverts the migration properties of dendritic cells to gain access to CD4+ T-cells in lymph nodes. Virus transmission to permissive T-cells occurs either in trans (without DCs infection, through viral capture and transmission), or in cis (following DCs productive infection, through the usual CD4-gp120 interaction), thereby inducing a robust infection. In trans infection, bound virions remain infectious over days and it is proposed that they are not degraded, but protected in non-lysosomal acidic organelles within the DCs close to the cell membrane thus contributing to the viral infectious potential during DCs' migration from the periphery to the lymphoid tissues. On arrival at lymphoid tissues, intact virions recycle back to DCs' cell surface allowing virus transmission to CD4+ T-cells. Acts as a class I viral fusion protein. Under the current model, the protein has at least 3 conformational states: pre-fusion native state, pre-hairpin intermediate state, and post-fusion hairpin state. During fusion of viral and target intracellular membranes, the coiled coil regions (heptad repeats) assume a trimer-of-hairpins structure, positioning the fusion peptide in close proximity to the C-terminal region of the ectodomain. The formation of this structure appears to drive apposition and subsequent fusion of viral and target cell membranes. Complete fusion occurs in host cell endosomes and is dynamin-dependent, however some lipid transfer might occur at the plasma membrane. The virus undergoes clathrin-dependent internalization long before endosomal fusion, thus minimizing the surface exposure of conserved viral epitopes during fusion and reducing the efficacy of inhibitors targeting these epitopes. Membranes fusion leads to delivery of the nucleocapsid into the cytoplasm. In Human immunodeficiency virus type 1 group O (isolate ANT70) (HIV-1), this protein is Envelope glycoprotein gp160.